The primary structure comprises 313 residues: Methionyl-tRNA formyltransferase (313 aa).

A (6S)-5,6,7,8-tetrahydrofolate-binding site is contributed by 112 to 115 (SLLP).

The protein belongs to the Fmt family.

It catalyses the reaction L-methionyl-tRNA(fMet) + (6R)-10-formyltetrahydrofolate = N-formyl-L-methionyl-tRNA(fMet) + (6S)-5,6,7,8-tetrahydrofolate + H(+). Functionally, attaches a formyl group to the free amino group of methionyl-tRNA(fMet). The formyl group appears to play a dual role in the initiator identity of N-formylmethionyl-tRNA by promoting its recognition by IF2 and preventing the misappropriation of this tRNA by the elongation apparatus. The chain is Methionyl-tRNA formyltransferase from Geotalea uraniireducens (strain Rf4) (Geobacter uraniireducens).